The chain runs to 482 residues: MTMSKEAVTFKDVAVVFTEEELGLLDLAQRKLYRDVMLENFRNLLSVGHQPFHRDTFHFLREEKFWMMDIATQREGNSGGKIQPEMKTFPEAGPHEGWSCQQIWEEIASDLTRPQDSTIKSSQFFEQGDAHSQVEEGLSIMHTGQKPSNCGKCKQSFSDMSIFDLPQQIRSAEKSHSCDECGKSFCYISALHIHQRVHLGEKLFKCDVCGKEFSQSLHLQTHQRVHTGEKPFKCEQCGRGFRCRSALTVHCKLHMGEKHYNCEACGRAFIHDFQLQKHQRIHTGEKPFKCEICSVSFRLRSSLNRHCVVHTGKKPNSTGEYGKGFIRRLDLCKHQTIHTGEKPYNCKECGKSFRRSSYLLIHQRVHTGEKPYKCDKCGKSYITKSGLDLHHRAHTGERPYNCDDCGKSFRQASSILNHKRLHCRKKPFKCEDCGKKLVYRSYRKDQQKNHSGENPSKCEDCGKRYKRRLNLDIILSLFLNDT.

Residues 8–78 (VTFKDVAVVF…DIATQREGNS (71 aa)) enclose the KRAB domain. C2H2-type zinc fingers lie at residues 176–198 (HSCDECGKSFCYISALHIHQRVH), 204–226 (FKCDVCGKEFSQSLHLQTHQRVH), 232–254 (FKCEQCGRGFRCRSALTVHCKLH), 260–282 (YNCEACGRAFIHDFQLQKHQRIH), and 288–310 (FKCEICSVSFRLRSSLNRHCVVH). The segment at 316 to 338 (NSTGEYGKGFIRRLDLCKHQTIH) adopts a C2H2-type 6; degenerate zinc-finger fold. C2H2-type zinc fingers lie at residues 344-366 (YNCKECGKSFRRSSYLLIHQRVH), 372-394 (YKCDKCGKSYITKSGLDLHHRAH), and 400-422 (YNCDDCGKSFRQASSILNHKRLH). The C2H2-type 10; degenerate zinc finger occupies 428 to 450 (FKCEDCGKKLVYRSYRKDQQKNH).

Belongs to the krueppel C2H2-type zinc-finger protein family.

It localises to the nucleus. Functionally, may be involved in transcriptional regulation. This chain is Zinc finger protein 223 (ZNF223), found in Homo sapiens (Human).